We begin with the raw amino-acid sequence, 460 residues long: RING finger protein DG17 (460 aa).

Residues 27–67 (CPICFEFIYKKQIYQCKSGHHACKECWEKSLETKKECMTCK) form an RING-type zinc finger. TRAF-type zinc fingers lie at residues 141–194 (SHLI…KKEL) and 196–253 (THYK…SELQ). Residues 269–294 (IEKLTNQVGQSKKTHDELLKKIEDLS) are a coiled coil. The MATH domain maps to 320–448 (GYRNKWIISN…DDKLIIEIYI (129 aa)).

This sequence belongs to the TNF receptor-associated factor family. A subfamily.

The protein resides in the cytoplasm. Its function is as follows. Probable adapter protein and signal transducer that links members of the tumor necrosis factor receptor family to different signaling pathways by association with the receptor cytoplasmic domain and kinases. The protein is RING finger protein DG17 (zfaA) of Dictyostelium discoideum (Social amoeba).